A 344-amino-acid polypeptide reads, in one-letter code: Serine/arginine-rich splicing factor 6 (344 aa).

An RRM 1 domain is found at 1–72 (MPRVYIGRLS…ERVIVEHARG (72 aa)). 3 positions are modified to phosphoserine: S45, S81, and S84. Positions 75-103 (RDRDGYSYGSRSGGGGYSSRRTSGRDKYG) are disordered. Residues 110-183 (YRLIVENLSS…RNIRLIEDKP (74 aa)) enclose the RRM 2 domain. The residue at position 165 (K165) is an N6-acetyllysine. The interval 176 to 344 (IRLIEDKPRT…RSRSRSSSRD (169 aa)) is disordered. K182 participates in a covalent cross-link: Glycyl lysine isopeptide (Lys-Gly) (interchain with G-Cter in SUMO2). Positions 185–250 (TSHRRSYSGS…RKSRSKSKSK (66 aa)) are enriched in basic residues. Basic and acidic residues-rich tracts occupy residues 264-273 (RSKDEYEKSR) and 280-291 (SPKENGKGDIKS). Phosphoserine is present on residues S297 and S299. S303 carries the phosphoserine; by DYRK1A modification. A phosphoserine mark is found at S314 and S316. The segment covering 322–344 (ATSRSRSRSRSKSRSRSRSSSRD) has biased composition (basic residues).

This sequence belongs to the splicing factor SR family. Binds SREK1/SFRS12. Interacts with DYRK1A. In terms of processing, extensively phosphorylated on serine residues in the RS domain. Phosphorylated by DYRK1A, probably in the RS domain. Phosphorylation by DYRK1A modulates alternative splice site selection and inhibits the expression of MAPT/Tau exon 10.

It is found in the nucleus. It localises to the nucleus speckle. Plays a role in constitutive splicing and modulates the selection of alternative splice sites. Plays a role in the alternative splicing of MAPT/Tau exon 10. Binds to alternative exons of TNC pre-mRNA and promotes the expression of alternatively spliced TNC. Plays a role in wound healing and in the regulation of keratinocyte differentiation and proliferation via its role in alternative splicing. In Homo sapiens (Human), this protein is Serine/arginine-rich splicing factor 6 (SRSF6).